Here is a 157-residue protein sequence, read N- to C-terminus: Beta-defensin 125 (157 aa).

The signal sequence occupies residues 1 to 20 (MNLLMLTFIICGLLTQVTKG). Intrachain disulfides connect C27–C55, C35–C49, and C39–C56. Positions 109–157 (GETITPETNTPETTMPPSETTSSKTTMPPSETATSETMPPPSQTALTHN) are disordered. Over residues 110 to 140 (ETITPETNTPETTMPPSETTSSKTTMPPSET) the composition is skewed to low complexity. The span at 141–157 (ATSETMPPPSQTALTHN) shows a compositional bias: polar residues.

Belongs to the beta-defensin family.

Its subcellular location is the secreted. Functionally, has antibacterial activity. The polypeptide is Beta-defensin 125 (DEFB125) (Pongo pygmaeus (Bornean orangutan)).